The chain runs to 165 residues: Peptide deformylase (165 aa).

Fe cation contacts are provided by Cys-93 and His-135. The active site involves Glu-136. Residue His-139 participates in Fe cation binding.

It belongs to the polypeptide deformylase family. Requires Fe(2+) as cofactor.

It catalyses the reaction N-terminal N-formyl-L-methionyl-[peptide] + H2O = N-terminal L-methionyl-[peptide] + formate. Removes the formyl group from the N-terminal Met of newly synthesized proteins. Requires at least a dipeptide for an efficient rate of reaction. N-terminal L-methionine is a prerequisite for activity but the enzyme has broad specificity at other positions. The polypeptide is Peptide deformylase (Thermodesulfovibrio yellowstonii (strain ATCC 51303 / DSM 11347 / YP87)).